A 457-amino-acid chain; its full sequence is Cyanidin 3-O-galactoside 2''-O-xylosyltransferase FGGT1 (457 aa).

Belongs to the UDP-glycosyltransferase family. Expressed in ovaries.

It catalyses the reaction cyanidin 3-O-beta-D-galactoside + UDP-alpha-D-xylose = cyanidin 3-O-[beta-D-xylosyl-(1-&gt;2)-beta-D-galactoside] + UDP + H(+). Its pathway is pigment biosynthesis; anthocyanin biosynthesis. In terms of biological role, xylosyltransferase involved in anthocyanin biosynthesis by catalyzing the xylosylation of cyanidin 3-O-galactoside to form cyanidin 3-O-[2-O-(-xylosyl)-galactoside]. Required for the accumulation of anthocyanin in red-fleshed kiwifruit varieties. The protein is Cyanidin 3-O-galactoside 2''-O-xylosyltransferase FGGT1 of Actinidia chinensis var. chinensis (Chinese soft-hair kiwi).